Reading from the N-terminus, the 94-residue chain is Co-chaperonin GroES (94 aa).

Heptamer of 7 subunits arranged in a ring. Interacts with the chaperonin GroEL.

It is found in the cytoplasm. Its function is as follows. Together with the chaperonin GroEL, plays an essential role in assisting protein folding. The GroEL-GroES system forms a nano-cage that allows encapsulation of the non-native substrate proteins and provides a physical environment optimized to promote and accelerate protein folding. GroES binds to the apical surface of the GroEL ring, thereby capping the opening of the GroEL channel. The polypeptide is Co-chaperonin GroES (Thermoanaerobacter brockii (Thermoanaerobium brockii)).